The sequence spans 221 residues: Cytochrome c biogenesis ATP-binding export protein CcmA (221 aa).

The 208-residue stretch at 14 to 221 (LACHDVSCLR…FDLLDESHFS (208 aa)) folds into the ABC transporter domain. 46-53 (GANGIGKS) serves as a coordination point for ATP.

This sequence belongs to the ABC transporter superfamily. CcmA exporter (TC 3.A.1.107) family. The complex is composed of two ATP-binding proteins (CcmA) and two transmembrane proteins (CcmB).

It is found in the cell inner membrane. It carries out the reaction heme b(in) + ATP + H2O = heme b(out) + ADP + phosphate + H(+). Part of the ABC transporter complex CcmAB involved in the biogenesis of c-type cytochromes; once thought to export heme, this seems not to be the case, but its exact role is uncertain. Responsible for energy coupling to the transport system. The chain is Cytochrome c biogenesis ATP-binding export protein CcmA from Zymomonas mobilis subsp. mobilis (strain ATCC 31821 / ZM4 / CP4).